The primary structure comprises 876 residues: Phosphoenolpyruvate carboxylase (876 aa).

Catalysis depends on residues histidine 138 and lysine 544.

Belongs to the PEPCase type 1 family. The cofactor is Mg(2+).

It catalyses the reaction oxaloacetate + phosphate = phosphoenolpyruvate + hydrogencarbonate. In terms of biological role, forms oxaloacetate, a four-carbon dicarboxylic acid source for the tricarboxylic acid cycle. In Marinomonas sp. (strain MWYL1), this protein is Phosphoenolpyruvate carboxylase.